Consider the following 172-residue polypeptide: Ribosome maturation factor RimM (172 aa).

Positions 96 to 168 (DGEFYYHEII…RIEVELMEGL (73 aa)) constitute a PRC barrel domain.

Belongs to the RimM family. As to quaternary structure, binds ribosomal protein uS19.

It localises to the cytoplasm. Its function is as follows. An accessory protein needed during the final step in the assembly of 30S ribosomal subunit, possibly for assembly of the head region. Essential for efficient processing of 16S rRNA. May be needed both before and after RbfA during the maturation of 16S rRNA. It has affinity for free ribosomal 30S subunits but not for 70S ribosomes. The sequence is that of Ribosome maturation factor RimM from Streptococcus thermophilus (strain ATCC BAA-491 / LMD-9).